The sequence spans 247 residues: Carboxy-S-adenosyl-L-methionine synthase (247 aa).

Residues tyrosine 39, glycine 64–serine 66, aspartate 89–asparagine 90, aspartate 117–isoleucine 118, asparagine 132, and arginine 199 each bind S-adenosyl-L-methionine.

The protein belongs to the class I-like SAM-binding methyltransferase superfamily. Cx-SAM synthase family. In terms of assembly, homodimer.

The enzyme catalyses prephenate + S-adenosyl-L-methionine = carboxy-S-adenosyl-L-methionine + 3-phenylpyruvate + H2O. In terms of biological role, catalyzes the conversion of S-adenosyl-L-methionine (SAM) to carboxy-S-adenosyl-L-methionine (Cx-SAM). The chain is Carboxy-S-adenosyl-L-methionine synthase from Shigella sonnei (strain Ss046).